The chain runs to 160 residues: Cytochrome c-type biogenesis protein CcmE (160 aa).

At 1 to 8 (MNPRRKNR) the chain is on the cytoplasmic side. A helical; Signal-anchor for type II membrane protein membrane pass occupies residues 9 to 29 (LILVMLVLVGLGLATALVMYA). Residues 30-160 (LRSNIDLFYT…AVGDNSVRPS (131 aa)) lie on the Periplasmic side of the membrane. Positions 130 and 134 each coordinate heme. The segment covering 133 to 148 (KYTPPEIEDAMKKDHP) has biased composition (basic and acidic residues). The disordered stretch occupies residues 133–160 (KYTPPEIEDAMKKDHPAQAVGDNSVRPS).

The protein belongs to the CcmE/CycJ family.

The protein localises to the cell inner membrane. Heme chaperone required for the biogenesis of c-type cytochromes. Transiently binds heme delivered by CcmC and transfers the heme to apo-cytochromes in a process facilitated by CcmF and CcmH. The protein is Cytochrome c-type biogenesis protein CcmE of Erwinia tasmaniensis (strain DSM 17950 / CFBP 7177 / CIP 109463 / NCPPB 4357 / Et1/99).